Reading from the N-terminus, the 498-residue chain is Probable cytosol aminopeptidase (498 aa).

K264 and D269 together coordinate Mn(2+). K276 is an active-site residue. D287, D346, and E348 together coordinate Mn(2+). R350 is a catalytic residue.

This sequence belongs to the peptidase M17 family. It depends on Mn(2+) as a cofactor.

The protein resides in the cytoplasm. It carries out the reaction Release of an N-terminal amino acid, Xaa-|-Yaa-, in which Xaa is preferably Leu, but may be other amino acids including Pro although not Arg or Lys, and Yaa may be Pro. Amino acid amides and methyl esters are also readily hydrolyzed, but rates on arylamides are exceedingly low.. The enzyme catalyses Release of an N-terminal amino acid, preferentially leucine, but not glutamic or aspartic acids.. Functionally, presumably involved in the processing and regular turnover of intracellular proteins. Catalyzes the removal of unsubstituted N-terminal amino acids from various peptides. The protein is Probable cytosol aminopeptidase of Xanthobacter autotrophicus (strain ATCC BAA-1158 / Py2).